Here is a 179-residue protein sequence, read N- to C-terminus: MNTNVFRLLLLGSLFSLSACVQQSEVRQMKHSVSTLNQEMTQLNQETVKITQQNRLNAKSSSGVYLLPGAKTPARLESQIGTLRMSLVNITPDADGTTLTLRIQGESNDPLPAFSGTVEYGQIQGTIDNFQEINVQNQLINAPASVLAPSDVDIPLQLKGISVDQLGFVRIHDIQPVMQ.

Positions 1–19 (MNTNVFRLLLLGSLFSLSA) are cleaved as a signal peptide. Cys-20 carries the N-palmitoyl cysteine lipid modification. Residue Cys-20 is the site of S-diacylglycerol cysteine attachment.

The protein localises to the cell membrane. This is an uncharacterized protein from Escherichia coli (strain K12).